We begin with the raw amino-acid sequence, 360 residues long: Nodulin-44 (360 aa).

The N-terminal stretch at 1-23 (MEEKILMRVIVITVFLFIGAATA) is a signal peptide. Disordered stretches follow at residues 123–148 (FSPRGRRSKLDNHQTDAGTLGKVIPL) and 228–249 (FSPRGRRSKLDNHQTDAGTLGR).

This sequence belongs to the nodulin 20 family.

In Glycine max (Soybean), this protein is Nodulin-44.